The chain runs to 347 residues: GDT1-like protein 2, chloroplastic (347 aa).

Residues 1–12 (MATAISVGVAVP) constitute a chloroplast transit peptide. Residues 70-97 (EAGSHGEHLDSSATRDSNKPTKPPSGSR) are disordered. The next 7 helical transmembrane spans lie at 99–119 (PQSIAAVLLLCALASAFIVFF), 124–144 (SAVVAMLAKSGFTAAFTLIFV), 165–185 (ALVLLGSMAALSLMTIVSVII), 196–216 (FQTTLPIGEYAAIALLAFFGF), 257–277 (LTSPLEVLWKSFSLVFFAEWG), 299–319 (GAIAGHLVATFLAIVGGAFLA), and 327–347 (VGLIGGVLFLLFAVATFFGVF).

The protein belongs to the GDT1 family.

Its subcellular location is the plastid. The protein resides in the chloroplast membrane. The chain is GDT1-like protein 2, chloroplastic from Oryza sativa subsp. japonica (Rice).